The primary structure comprises 341 residues: MKALSKLHAKPGIWMTDVEKPECGYNDLLIKIKKTAICGTDVHIYKWDDWSQKTIPVPMVVGHEYVGEVAAMGDGVRGFEIGDRVSGEGHITCGHCRNCRAGRRHLCRNTYGVGVNRPGAFAEYLALPAENAFKLPDDVTDEMAAVFDPFGNAVHTALAFDLVGEDVLITGAGPIGIMAAAVARHVGARHVVITDVNEYRLDLARKMGVTRAVDVSKEKLSDVMTELGMKEGFDVGLEMSGVPSAFSQMLETMNHGGKIAMLGIPPENIAIDWNQVIFKGLVIKGIYGREMFETWYKMASLLQSGLDISPILTHEMPIDDFEKGFETMISGQSGKVILNWD.

Cys-38 is a binding site for Zn(2+). Catalysis depends on charge relay system residues Thr-40 and His-43. Zn(2+) is bound by residues His-63, Glu-64, Cys-93, Cys-96, Cys-99, and Cys-107. Residues Ile-175, Asp-195, Arg-200, 262–264 (LGI), and 286–287 (IY) contribute to the NAD(+) site.

It belongs to the zinc-containing alcohol dehydrogenase family. Homotetramer. Zn(2+) serves as cofactor.

The protein localises to the cytoplasm. It catalyses the reaction L-threonine + NAD(+) = (2S)-2-amino-3-oxobutanoate + NADH + H(+). It functions in the pathway amino-acid degradation; L-threonine degradation via oxydo-reductase pathway; glycine from L-threonine: step 1/2. Functionally, catalyzes the NAD(+)-dependent oxidation of L-threonine to 2-amino-3-ketobutyrate. In Idiomarina loihiensis (strain ATCC BAA-735 / DSM 15497 / L2-TR), this protein is L-threonine 3-dehydrogenase.